The chain runs to 434 residues: Protein maelstrom homolog (434 aa).

Residues 4–73 (RKASRNAYYF…AQGKDSGPSE (70 aa)) constitute a DNA-binding region (HMG box). 2 disordered regions span residues 62–94 (RAAQ…KQNV) and 357–385 (SHFN…SGQN). The segment covering 357–371 (SHFNSANQEQRSNTP) has biased composition (polar residues).

It belongs to the maelstrom family. As to quaternary structure, interacts with SMARCB1, SIN3B and DDX4. Interacts with piRNA-associated proteins TDRD1, PIWIL1 and PIWIL2. Interacts with TEX19.

It localises to the cytoplasm. It is found in the nucleus. Plays a central role during spermatogenesis by repressing transposable elements and preventing their mobilization, which is essential for the germline integrity. Acts via the piRNA metabolic process, which mediates the repression of transposable elements during meiosis by forming complexes composed of piRNAs and Piwi proteins and governs the methylation and subsequent repression of transposons. Its association with piP-bodies suggests a participation in the secondary piRNAs metabolic process. Required for the localization of germ-cell factors to the meiotic nuage. The chain is Protein maelstrom homolog (MAEL) from Macaca fascicularis (Crab-eating macaque).